Consider the following 1325-residue polypeptide: Protein suppressor of sable (1325 aa).

Disordered stretches follow at residues 1 to 36 and 74 to 326; these read MSVA…SKIQ and VCLQ…GGSN. Acidic residues predominate over residues 9–30; that stretch reads PLIDLEEDLEDGEIDDDEEDEQ. The segment covering 119–131 has biased composition (polar residues); sequence RSSNQDTSDQSLE. The highly charged stretch occupies residues 138 to 327; it reads ATANPLLQST…GQEKMGGSNR (190 aa). The segment covering 149-158 has biased composition (basic residues); that stretch reads SSRRRKRKKE. A coiled-coil region spans residues 149 to 179; sequence SSRRRKRKKEREREQKKDKEQQNRSRRDEND. The segment covering 159–178 has biased composition (basic and acidic residues); the sequence is REREQKKDKEQQNRSRRDEN. The span at 236 to 246 shows a compositional bias: gly residues; it reads AGLGAGGGGGY. Positions 276-296 form a coiled coil; sequence NEKEHQRGVNNRKRRDRDRLE. C3H1-type zinc fingers lie at residues 330–357 and 358–381; these read PRKL…HKEF and PCKY…HGEP. Residues 444–478 are a coiled coil; that stretch reads KRQDHQMQQQQQQLQHQQLQQQQEQQQTQQQAAAD. The segment covering 499-509 has biased composition (basic and acidic residues); sequence KRKSRWTEKMG. 8 disordered regions span residues 499–535, 588–622, 639–695, 710–745, 780–835, 979–1058, 1143–1170, and 1295–1325; these read KRKS…LPPH, KAED…KSNG, FSGN…PSVF, SARQ…IGGG, AHSG…ALPP, DLET…GGSK, EPNG…GGGV, and RGGH…NRNI. At S524 the chain carries Phosphoserine. Over residues 594 to 606 the composition is skewed to polar residues; it reads PQTQAELESSTPP. Phosphothreonine is present on T604. The span at 644–668 shows a compositional bias: acidic residues; it reads PLDDDRDDDEQLIIDDGNDSTAEED. S663 is modified (phosphoserine). At T664 the chain carries Phosphothreonine. A compositionally biased stretch (polar residues) spans 710-726; it reads SARQLLPASATSPNQEN. A compositionally biased stretch (low complexity) spans 790 to 800; it reads SNENSNSNSHS. A compositionally biased stretch (pro residues) spans 1003-1015; it reads SVPPPSMRVPPPN. Basic and acidic residues predominate over residues 1021 to 1033; it reads PTVRTDPRRDPRR. Over residues 1042-1056 the composition is skewed to low complexity; that stretch reads GASTANTTAPNASGG. 2 stretches are compositionally biased toward gly residues: residues 1149-1170 and 1295-1309; these read AALG…GGGV and RGGH…GNGN.

Belongs to the suppressor of sable family. Interacts with Wdr82.

It localises to the nucleus. It is found in the chromosome. RNA-binding protein that suppresses transcription of some RNAs. Together with Wdr82, part of a transcription termination checkpoint that promotes transcription termination of RNAs and their subsequent degradation by the nuclear exosome. Promotes transcription termination of aberrant RNAs, transcripts from genes containing a transposon inserted at their very 5' end or RNAs from heat-shock-inducible repetitive element. Binds RNA preferentially at a sequence that resembles a cryptic 5'-splice site. This Drosophila melanogaster (Fruit fly) protein is Protein suppressor of sable.